The chain runs to 319 residues: MTKKMSMQDIILNLQEYWAEQGANLMQAYDNEVGAGTQSPYTFLRANGPEPWNAAYVQPSRRPADGRYGHNPNRLFQHHQFQVVMKPSPENIQELYLGSLTRLGLKASEHDIRFVEDNWENPSMGAAGIGWEVWLDGMEVTQFTYFQQVGSIEVDSVTAEITYGLERLASYIQDVLSVYDLEWGNGVMYGDIFKEPEYEHSVYSFDQSDEKMLLENFDQYEAEAKRLTKLGLVHPAYDYILKLSHIFNLLDARGAVSVTERAGYMHRIRSMARAIAREFITARAKLGFPLLKDSKLREKYIGEKGIYTKKLAKKIKKEA.

It belongs to the class-II aminoacyl-tRNA synthetase family. In terms of assembly, tetramer of two alpha and two beta subunits.

The protein resides in the cytoplasm. The catalysed reaction is tRNA(Gly) + glycine + ATP = glycyl-tRNA(Gly) + AMP + diphosphate. This chain is Glycine--tRNA ligase alpha subunit, found in Oenococcus oeni (strain ATCC BAA-331 / PSU-1).